A 284-amino-acid polypeptide reads, in one-letter code: 2-dehydro-3-deoxyphosphooctonate aldolase (284 aa).

This sequence belongs to the KdsA family.

Its subcellular location is the cytoplasm. The catalysed reaction is D-arabinose 5-phosphate + phosphoenolpyruvate + H2O = 3-deoxy-alpha-D-manno-2-octulosonate-8-phosphate + phosphate. The protein operates within carbohydrate biosynthesis; 3-deoxy-D-manno-octulosonate biosynthesis; 3-deoxy-D-manno-octulosonate from D-ribulose 5-phosphate: step 2/3. Its pathway is bacterial outer membrane biogenesis; lipopolysaccharide biosynthesis. This chain is 2-dehydro-3-deoxyphosphooctonate aldolase, found in Ralstonia pickettii (strain 12J).